Reading from the N-terminus, the 394-residue chain is Argininosuccinate synthase (394 aa).

Residue 8–16 participates in ATP binding; it reads AYSGGLDTS. Tyrosine 86 and serine 91 together coordinate L-citrulline. Glycine 116 provides a ligand contact to ATP. 3 residues coordinate L-aspartate: threonine 118, asparagine 122, and aspartate 123. L-citrulline is bound at residue asparagine 122. Arginine 126, serine 172, serine 181, glutamate 256, and tyrosine 268 together coordinate L-citrulline.

The protein belongs to the argininosuccinate synthase family. Type 1 subfamily. Homotetramer.

Its subcellular location is the cytoplasm. It carries out the reaction L-citrulline + L-aspartate + ATP = 2-(N(omega)-L-arginino)succinate + AMP + diphosphate + H(+). It functions in the pathway amino-acid biosynthesis; L-arginine biosynthesis; L-arginine from L-ornithine and carbamoyl phosphate: step 2/3. In Methanococcoides burtonii (strain DSM 6242 / NBRC 107633 / OCM 468 / ACE-M), this protein is Argininosuccinate synthase.